The chain runs to 242 residues: DNA repair protein RecO (242 aa).

Belongs to the RecO family.

Functionally, involved in DNA repair and RecF pathway recombination. This chain is DNA repair protein RecO, found in Bacteroides fragilis (strain ATCC 25285 / DSM 2151 / CCUG 4856 / JCM 11019 / LMG 10263 / NCTC 9343 / Onslow / VPI 2553 / EN-2).